The sequence spans 25 residues: MADAAVHGHGDHHDTRGFFTRWFMS.

It belongs to the heme-copper respiratory oxidase family. The cofactor is Cu(2+). It depends on heme as a cofactor.

Its subcellular location is the cell inner membrane. It carries out the reaction 4 Fe(II)-[cytochrome c] + O2 + 8 H(+)(in) = 4 Fe(III)-[cytochrome c] + 2 H2O + 4 H(+)(out). Its pathway is energy metabolism; oxidative phosphorylation. Subunit I and II form the functional core of the enzyme complex. Electrons originating in cytochrome c are transferred via heme a and Cu(A) to the binuclear center formed by heme a3 and Cu(B). This cytochrome c oxidase shows proton pump activity across the membrane in addition to the electron transfer. This is Cytochrome c oxidase subunit 1 (ctaD) from Paracoccus versutus (Thiobacillus versutus).